Here is a 491-residue protein sequence, read N- to C-terminus: Probable glycine dehydrogenase (decarboxylating) subunit 2 (491 aa).

N6-(pyridoxal phosphate)lysine is present on Lys264.

The protein belongs to the GcvP family. C-terminal subunit subfamily. The glycine cleavage system is composed of four proteins: P, T, L and H. In this organism, the P 'protein' is a heterodimer of two subunits. Requires pyridoxal 5'-phosphate as cofactor.

The catalysed reaction is N(6)-[(R)-lipoyl]-L-lysyl-[glycine-cleavage complex H protein] + glycine + H(+) = N(6)-[(R)-S(8)-aminomethyldihydrolipoyl]-L-lysyl-[glycine-cleavage complex H protein] + CO2. The glycine cleavage system catalyzes the degradation of glycine. The P protein binds the alpha-amino group of glycine through its pyridoxal phosphate cofactor; CO(2) is released and the remaining methylamine moiety is then transferred to the lipoamide cofactor of the H protein. The polypeptide is Probable glycine dehydrogenase (decarboxylating) subunit 2 (Coxiella burnetii (strain CbuK_Q154) (Coxiella burnetii (strain Q154))).